Here is a 466-residue protein sequence, read N- to C-terminus: MSNNTDLSPVHVIGGGLAGSEAAWQIAQAGVPVVLHEMRPVRGTDAHKTEQLAELVCSNSFRSDDAETNAVGVLHAEMRLAGSLIMACADAHQVPAGGALAVDREGFSQAVTARLEAHPLITIEREEITGLPPTEWGTTIIATGPLTAPSLAEAIAAETDADALAFFDAIAPIIHFDSINMDVCWFQSRYDKVGPGGTGKDYINCPMDEEQYEAFVAALIEGDKTDFKEWEGTPYFDGCLPIEVMAERGPETLRHGPMKPMGLTNAHNPTVKPYAVVQLRQDNALGTLYNMVGFQTKLKYGSQTGIFKMIPGLENAEFARLGGLHRNTYLNSPVLLDNVLRLKSRQTLRFAGQVTGCEGYVESSAIGLLAGRFTAAEKLSQAAVPPPPTTAFGALLGHITGGHIVTDDEPGKRSFQPMNVNFGLFPPVDVPKPEGKRLRGKEKTIAKKRALSARALADCRNWLSLY.

Gly14–Gly19 is a binding site for FAD.

The protein belongs to the MnmG family. TrmFO subfamily. FAD is required as a cofactor.

Its subcellular location is the cytoplasm. It carries out the reaction uridine(54) in tRNA + (6R)-5,10-methylene-5,6,7,8-tetrahydrofolate + NADH + H(+) = 5-methyluridine(54) in tRNA + (6S)-5,6,7,8-tetrahydrofolate + NAD(+). It catalyses the reaction uridine(54) in tRNA + (6R)-5,10-methylene-5,6,7,8-tetrahydrofolate + NADPH + H(+) = 5-methyluridine(54) in tRNA + (6S)-5,6,7,8-tetrahydrofolate + NADP(+). Functionally, catalyzes the folate-dependent formation of 5-methyl-uridine at position 54 (M-5-U54) in all tRNAs. The chain is Methylenetetrahydrofolate--tRNA-(uracil-5-)-methyltransferase TrmFO from Brucella canis (strain ATCC 23365 / NCTC 10854 / RM-666).